Consider the following 751-residue polypeptide: Polyadenylate-binding protein, cytoplasmic and nuclear (751 aa).

Polar residues-rich tracts occupy residues 1–26 (MSAE…NPAA) and 36–50 (ESAS…NQPH). The segment at 1-50 (MSAEVSTTPAADNTVNGTPEATNPAATSAPEVTAVESASPSATPSANQPH) is disordered. 4 RRM domains span residues 52 to 130 (ASLY…WSQR), 140 to 217 (GNVF…HHIS), 233 to 310 (TNVY…RAQK), and 336 to 458 (VNLY…LAQR). Disordered regions lie at residues 371-413 (TVTA…KKTE) and 601-643 (GQGM…REEV). The span at 379 to 413 (ESEKEKESNKENEKEGEEKTEEKPKESEEEAKKTE) shows a compositional bias: basic and acidic residues. Residues 603–629 (GMRGPGYGQGRGGAPVQGGPRPQGGRG) show a composition bias toward gly residues. Positions 646-723 (TGGLTAQTLN…ALSVYDEYMK (78 aa)) constitute a PABC domain. The interval 725–751 (KGEGEAPAEPAKPKEDAAETATEENKS) is disordered. Positions 735-751 (AKPKEDAAETATEENKS) are enriched in basic and acidic residues.

This sequence belongs to the polyadenylate-binding protein type-1 family.

It is found in the cytoplasm. It localises to the nucleus. Its function is as follows. Binds the poly(A) tail of mRNA. Appears to be an important mediator of the multiple roles of the poly(A) tail in mRNA biogenesis, stability and translation. In the nucleus, involved in both mRNA cleavage and polyadenylation. Is also required for efficient mRNA export to the cytoplasm. Acts in concert with a poly(A)-specific nuclease (PAN) to affect poly(A) tail shortening, which may occur concomitantly with either nucleocytoplasmic mRNA transport or translational initiation. In the cytoplasm, stimulates translation initiation and regulates mRNA decay through translation termination-coupled poly(A) shortening, probably mediated by PAN. The chain is Polyadenylate-binding protein, cytoplasmic and nuclear (pab1) from Neosartorya fischeri (strain ATCC 1020 / DSM 3700 / CBS 544.65 / FGSC A1164 / JCM 1740 / NRRL 181 / WB 181) (Aspergillus fischerianus).